Consider the following 131-residue polypeptide: D-ribose pyranase (131 aa).

His-20 functions as the Proton donor in the catalytic mechanism. Substrate-binding positions include Asp-28, His-98, and 120-122 (YAN).

The protein belongs to the RbsD / FucU family. RbsD subfamily. Homodecamer.

The protein localises to the cytoplasm. The catalysed reaction is beta-D-ribopyranose = beta-D-ribofuranose. It participates in carbohydrate metabolism; D-ribose degradation; D-ribose 5-phosphate from beta-D-ribopyranose: step 1/2. Its function is as follows. Catalyzes the interconversion of beta-pyran and beta-furan forms of D-ribose. The polypeptide is D-ribose pyranase (Clostridium tetani (strain Massachusetts / E88)).